The sequence spans 856 residues: DNA mismatch repair protein MutS (856 aa).

Glycine 618 to serine 625 contributes to the ATP binding site.

It belongs to the DNA mismatch repair MutS family.

In terms of biological role, this protein is involved in the repair of mismatches in DNA. It is possible that it carries out the mismatch recognition step. This protein has a weak ATPase activity. In Shewanella baltica (strain OS223), this protein is DNA mismatch repair protein MutS.